The primary structure comprises 476 residues: Xylan O-acetyltransferase 4 (476 aa).

The interval 1-37 (MTKPQQQSPPSTTATTTTSPPPPPPSTPPPASSSSSS) is disordered. The Cytoplasmic portion of the chain corresponds to 1 to 63 (MTKPQQQSPP…SLLSALRRSP (63 aa)). Low complexity predominate over residues 8–18 (SPPSTTATTTT). The span at 19–31 (SPPPPPPSTPPPA) shows a compositional bias: pro residues. The chain crosses the membrane as a helical; Signal-anchor for type II membrane protein span at residues 64–80 (VTTLVAAFFLLALFMYG). Topologically, residues 81–476 (EDVRTLAELS…PSPHPPLPPQ (396 aa)) are lumenal. N-linked (GlcNAc...) asparagine glycosylation is found at Asn-103, Asn-128, and Asn-167. 4 disulfide bridges follow: Cys-117/Cys-168, Cys-139/Cys-204, Cys-148/Cys-444, and Cys-360/Cys-440. A GDS motif motif is present at residues 191–193 (GDS). Ser-193 (nucleophile) is an active-site residue. Asn-299 and Asn-369 each carry an N-linked (GlcNAc...) asparagine glycan. The Proton donor role is filled by Asp-439. Positions 439–442 (DCIH) match the DXXH motif motif. His-442 acts as the Proton acceptor in catalysis.

Belongs to the PC-esterase family. TBL subfamily. As to expression, highly expressed in leaves. Expressed in roots, stems and inflorescences.

The protein resides in the golgi apparatus membrane. Functionally, xylan acetyltransferase required for 2-O- and 3-O-monoacetylation of xylosyl residues in xylan. Catalyzes the 2-O-acetylation of xylan, followed by nonenzymatic acetyl migration to the O-3 position, resulting in products that are monoacetylated at both O-2 and O-3 positions. The polypeptide is Xylan O-acetyltransferase 4 (Oryza sativa subsp. japonica (Rice)).